Reading from the N-terminus, the 369-residue chain is 2-aminoethylphosphonate--pyruvate transaminase (369 aa).

Residue Lys-193 is modified to N6-(pyridoxal phosphate)lysine.

It belongs to the class-V pyridoxal-phosphate-dependent aminotransferase family. PhnW subfamily. In terms of assembly, homodimer. Pyridoxal 5'-phosphate is required as a cofactor.

It catalyses the reaction (2-aminoethyl)phosphonate + pyruvate = phosphonoacetaldehyde + L-alanine. Functionally, involved in phosphonate degradation. The sequence is that of 2-aminoethylphosphonate--pyruvate transaminase from Burkholderia thailandensis (strain ATCC 700388 / DSM 13276 / CCUG 48851 / CIP 106301 / E264).